Reading from the N-terminus, the 164-residue chain is Pheromone-binding protein (164 aa).

The signal sequence occupies residues 1–22 (MSIQGQIALALMVNMAVGSVDA). 3 disulfide bridges follow: C41-C76, C72-C130, and C119-C139.

The protein belongs to the PBP/GOBP family. In terms of assembly, homodimer. In terms of tissue distribution, antenna.

This major soluble protein in olfactory sensilla of male moths serves to solubilize the extremely hydrophobic pheromone molecules such as bombykol and to transport pheromone through the aqueous lymph to receptors located on olfactory cilia. The polypeptide is Pheromone-binding protein (Bombyx mori (Silk moth)).